The sequence spans 488 residues: Protein nucleotidyltransferase YdiU (488 aa).

Residues G91, G93, R94, K114, D126, G127, R177, and R184 each coordinate ATP. D253 acts as the Proton acceptor in catalysis. Mg(2+)-binding residues include N254 and D263. D263 serves as a coordination point for ATP.

This sequence belongs to the SELO family. It depends on Mg(2+) as a cofactor. The cofactor is Mn(2+).

It catalyses the reaction L-seryl-[protein] + ATP = 3-O-(5'-adenylyl)-L-seryl-[protein] + diphosphate. It carries out the reaction L-threonyl-[protein] + ATP = 3-O-(5'-adenylyl)-L-threonyl-[protein] + diphosphate. The catalysed reaction is L-tyrosyl-[protein] + ATP = O-(5'-adenylyl)-L-tyrosyl-[protein] + diphosphate. The enzyme catalyses L-histidyl-[protein] + UTP = N(tele)-(5'-uridylyl)-L-histidyl-[protein] + diphosphate. It catalyses the reaction L-seryl-[protein] + UTP = O-(5'-uridylyl)-L-seryl-[protein] + diphosphate. It carries out the reaction L-tyrosyl-[protein] + UTP = O-(5'-uridylyl)-L-tyrosyl-[protein] + diphosphate. Nucleotidyltransferase involved in the post-translational modification of proteins. It can catalyze the addition of adenosine monophosphate (AMP) or uridine monophosphate (UMP) to a protein, resulting in modifications known as AMPylation and UMPylation. This Bacillus mycoides (strain KBAB4) (Bacillus weihenstephanensis) protein is Protein nucleotidyltransferase YdiU.